Consider the following 755-residue polypeptide: Protein MTSS 1 (755 aa).

One can recognise an IMD domain in the interval 1–250 (MEAVIEKECS…EQVILDLKGS (250 aa)). Residues 108–155 (LQEQMEEWKKVANQLDKDHAKEYKKARQEIKKKSSDTLKLQKKAKKGR) adopt a coiled-coil conformation. Disordered stretches follow at residues 139-159 (KKSS…GDIQ) and 255-305 (SYQT…RSSN). The residue at position 258 (Thr258) is a Phosphothreonine. Residues Ser261, Ser262, Ser271, and Ser322 each carry the phosphoserine modification. The segment at 327–351 (QDAFQSKSPSPMPPEAPNQLSNGFS) is disordered. The residue at position 425 (Thr425) is a Phosphothreonine. 3 disordered regions span residues 428–470 (RRKE…TRPG), 490–513 (DTQR…TTPC), and 563–755 (QAKR…PRFS). Positions 443–453 (TTASGPPAAAE) are enriched in low complexity. Thr603 carries the phosphothreonine modification. Positions 608-623 (PIPIKTPVIPVKTPTV) are enriched in low complexity. A phosphoserine mark is found at Ser644 and Ser647. Positions 656 to 671 (GVTSMPSSMWSGQASV) are enriched in polar residues. The region spanning 727–744 (QGEDMLNAIRRGVKLKKT) is the WH2 domain.

It belongs to the MTSS family. In terms of assembly, binds to actin. Binds to the cytoplasmic domain of receptor protein tyrosine phosphatase delta. Expressed in many tissues, including spleen, thymus, prostate, testis, uterus, colon, and peripheral blood.

Its subcellular location is the cytoplasm. It is found in the cytoskeleton. In terms of biological role, may be related to cancer progression or tumor metastasis in a variety of organ sites, most likely through an interaction with the actin cytoskeleton. The protein is Protein MTSS 1 of Homo sapiens (Human).